We begin with the raw amino-acid sequence, 245 residues long: tRNA (guanine-N(1)-)-methyltransferase (245 aa).

Residues glycine 111 and methionine 131–leucine 136 each bind S-adenosyl-L-methionine.

It belongs to the RNA methyltransferase TrmD family. In terms of assembly, homodimer.

Its subcellular location is the cytoplasm. It carries out the reaction guanosine(37) in tRNA + S-adenosyl-L-methionine = N(1)-methylguanosine(37) in tRNA + S-adenosyl-L-homocysteine + H(+). Its function is as follows. Specifically methylates guanosine-37 in various tRNAs. The polypeptide is tRNA (guanine-N(1)-)-methyltransferase (Staphylococcus epidermidis (strain ATCC 12228 / FDA PCI 1200)).